A 425-amino-acid chain; its full sequence is Cytokine receptor-like factor 1 (425 aa).

The N-terminal stretch at 1–33 is a signal peptide; sequence MPAGRPGPVAQSARRPPRPLSSLWSPLLLCVLG. An Ig-like C2-type domain is found at 35–134; the sequence is PRGGSGAHTA…SILAGSCLYV (100 aa). N-linked (GlcNAc...) asparagine glycans are attached at residues N95, N107, and N143. 2 consecutive Fibronectin type-III domains span residues 140–235 and 240–344; these read KPFN…VLDV and PPPD…TPRS. Residues C146 and C156 are joined by a disulfide bond. The N-linked (GlcNAc...) asparagine glycan is linked to N171. Cysteines 187 and 198 form a disulfide. Position 222 is a phosphoserine (S222). An N-linked (GlcNAc...) asparagine glycan is attached at N295. Residues 330–334 carry the WSXWS motif motif; sequence WSEWS. Positions 335–366 are disordered; sequence HPTAASTPRSERPGPGGGVCEPRGGEPSSGPV. N-linked (GlcNAc...) asparagine glycosylation is present at N385. Positions 402-425 are disordered; it reads HKTRNQDEGILPSGRRGAARGPAG. Positions 415-425 are enriched in low complexity; sequence GRRGAARGPAG.

Belongs to the type I cytokine receptor family. Type 3 subfamily. As to quaternary structure, forms covalent di- and tetramers. Forms a heteromeric complex with cardiotrophin-like cytokine CLCF1/CLC; the CRLF1-CLCF1 complex is a ligand for the ciliary neurotrophic factor receptor/CNTFR. The CRLF1-CLCF1 heterodimer, as well as tripartite signaling complex formed by CRLF1, CLCF1 and CNTFR bind SORL1 (via N-terminal ectodomain); within this complex, the interaction is mediated predominantly by the CRLF1 moiety. As to expression, widely expressed in the embryo. Not detected in the brain of adult mice.

The protein resides in the secreted. Its function is as follows. In complex with CLCF1, forms a heterodimeric neurotropic cytokine that plays a crucial role during neuronal development. Plays a role in the initiation and/or maintenance of suckling in neonatal mice. May also play a regulatory role in the immune system. The chain is Cytokine receptor-like factor 1 (Crlf1) from Mus musculus (Mouse).